Consider the following 522-residue polypeptide: Probable poly(ADP-ribose) glycohydrolase 2 (522 aa).

It belongs to the poly(ADP-ribose) glycohydrolase family.

The catalysed reaction is [(1''-&gt;2')-ADP-alpha-D-ribose](n) + H2O = [(1''-&gt;2')-ADP-alpha-D-ribose](n-1) + ADP-D-ribose. In terms of biological role, poly(ADP-ribose) synthesized after DNA damage is only present transiently and is rapidly degraded by poly(ADP-ribose) glycohydrolase. The chain is Probable poly(ADP-ribose) glycohydrolase 2 (PARG2) from Arabidopsis thaliana (Mouse-ear cress).